A 105-amino-acid polypeptide reads, in one-letter code: Flowering-promoting factor 1-like protein 5 (105 aa).

It belongs to the FPF1 family.

This Oryza sativa subsp. japonica (Rice) protein is Flowering-promoting factor 1-like protein 5.